The sequence spans 439 residues: Argininosuccinate lyase (439 aa).

This sequence belongs to the lyase 1 family. Argininosuccinate lyase subfamily.

It is found in the cytoplasm. It catalyses the reaction 2-(N(omega)-L-arginino)succinate = fumarate + L-arginine. It functions in the pathway amino-acid biosynthesis; L-arginine biosynthesis; L-arginine from L-ornithine and carbamoyl phosphate: step 3/3. The chain is Argininosuccinate lyase from Caldanaerobacter subterraneus subsp. tengcongensis (strain DSM 15242 / JCM 11007 / NBRC 100824 / MB4) (Thermoanaerobacter tengcongensis).